A 171-amino-acid polypeptide reads, in one-letter code: S-ribosylhomocysteine lyase (171 aa).

3 residues coordinate Fe cation: H54, H58, and C128.

This sequence belongs to the LuxS family. In terms of assembly, homodimer. Fe cation serves as cofactor.

The enzyme catalyses S-(5-deoxy-D-ribos-5-yl)-L-homocysteine = (S)-4,5-dihydroxypentane-2,3-dione + L-homocysteine. Its function is as follows. Involved in the synthesis of autoinducer 2 (AI-2) which is secreted by bacteria and is used to communicate both the cell density and the metabolic potential of the environment. The regulation of gene expression in response to changes in cell density is called quorum sensing. Catalyzes the transformation of S-ribosylhomocysteine (RHC) to homocysteine (HC) and 4,5-dihydroxy-2,3-pentadione (DPD). This Escherichia coli O81 (strain ED1a) protein is S-ribosylhomocysteine lyase.